Here is a 726-residue protein sequence, read N- to C-terminus: Catalase-peroxidase (726 aa).

The segment at 1-33 (MSTTDDTHNTLSTGKCPFHQGGHDRSAGAGTAS) is disordered. The segment at residues 105-226 (WHGAGTYRSI…LGATEMGLIY (122 aa)) is a cross-link (tryptophyl-tyrosyl-methioninium (Trp-Tyr) (with M-252)). Catalysis depends on histidine 106, which acts as the Proton acceptor. Positions 226–252 (YVNPEGPDHSGEPLSAAAAIRATFGNM) form a cross-link, tryptophyl-tyrosyl-methioninium (Tyr-Met) (with W-105). Histidine 267 lines the heme b pocket.

The protein belongs to the peroxidase family. Peroxidase/catalase subfamily. In terms of assembly, homodimer or homotetramer. It depends on heme b as a cofactor. In terms of processing, formation of the three residue Trp-Tyr-Met cross-link is important for the catalase, but not the peroxidase activity of the enzyme.

It catalyses the reaction H2O2 + AH2 = A + 2 H2O. The enzyme catalyses 2 H2O2 = O2 + 2 H2O. Its function is as follows. Bifunctional enzyme with both catalase and broad-spectrum peroxidase activity. The sequence is that of Catalase-peroxidase from Salmonella typhi.